Here is a 509-residue protein sequence, read N- to C-terminus: Steroid 17-alpha-hydroxylase/17,20 lyase (509 aa).

Residue asparagine 202 coordinates substrate. Cysteine 442 contacts heme.

The protein belongs to the cytochrome P450 family. It depends on heme as a cofactor.

Its subcellular location is the endoplasmic reticulum membrane. The protein localises to the microsome membrane. The catalysed reaction is a C21-steroid + reduced [NADPH--hemoprotein reductase] + O2 = a 17alpha-hydroxy-C21-steroid + oxidized [NADPH--hemoprotein reductase] + H2O + H(+). The enzyme catalyses progesterone + reduced [NADPH--hemoprotein reductase] + O2 = 17alpha-hydroxyprogesterone + oxidized [NADPH--hemoprotein reductase] + H2O + H(+). It carries out the reaction pregnenolone + reduced [NADPH--hemoprotein reductase] + O2 = 17alpha-hydroxypregnenolone + oxidized [NADPH--hemoprotein reductase] + H2O + H(+). It catalyses the reaction 17alpha-hydroxyprogesterone + reduced [NADPH--hemoprotein reductase] + O2 = androst-4-ene-3,17-dione + acetate + oxidized [NADPH--hemoprotein reductase] + H2O + 2 H(+). The catalysed reaction is 17alpha-hydroxyprogesterone + reduced [NADPH--hemoprotein reductase] + O2 = 16alpha,17alpha-dihydroxyprogesterone + oxidized [NADPH--hemoprotein reductase] + H2O + H(+). The enzyme catalyses 16alpha,17alpha-dihydroxyprogesterone + reduced [NADPH--hemoprotein reductase] + O2 = 6beta,16alpha,17alpha-trihydroxyprogesterone + oxidized [NADPH--hemoprotein reductase] + H2O + H(+). It carries out the reaction 17alpha-hydroxypregnenolone + reduced [NADPH--hemoprotein reductase] + O2 = 3beta-hydroxyandrost-5-en-17-one + acetate + oxidized [NADPH--hemoprotein reductase] + H2O + 2 H(+). It catalyses the reaction 16alpha,17alpha-dihydroxypregnenolone + reduced [NADPH--hemoprotein reductase] + O2 = 3beta,16alpha-dihydroxy-androst-5-en-17-one + acetate + oxidized [NADPH--hemoprotein reductase] + H2O + 2 H(+). The catalysed reaction is 3beta-hydroxyandrost-5-en-17-one + reduced [NADPH--hemoprotein reductase] + O2 = 3beta,16alpha-dihydroxy-androst-5-en-17-one + oxidized [NADPH--hemoprotein reductase] + H2O + H(+). The enzyme catalyses androst-4-ene-3,17-dione + reduced [NADPH--hemoprotein reductase] + O2 = 16alpha-hydroxyandrost-4-ene-3,17-dione + oxidized [NADPH--hemoprotein reductase] + H2O + H(+). Its pathway is steroid hormone biosynthesis. It participates in steroid biosynthesis; glucocorticoid biosynthesis. With respect to regulation, regulated predominantly by intracellular cAMP levels. The 17,20-lyase activity is stimulated by cytochrome b5, which acts as an allosteric effector increasing the Vmax of the lyase activity. In terms of biological role, a cytochrome P450 monooxygenase involved in corticoid and androgen biosynthesis. Catalyzes 17-alpha hydroxylation of C21 steroids, which is common for both pathways. A second oxidative step, required only for androgen synthesis, involves an acyl-carbon cleavage. The 17-alpha hydroxy intermediates, as part of adrenal glucocorticoids biosynthesis pathway, are precursors of cortisol. Hydroxylates steroid hormones, pregnenolone and progesterone to form 17-alpha hydroxy metabolites, followed by the cleavage of the C17-C20 bond to form C19 steroids, dehydroepiandrosterone (DHEA) and androstenedione. Has 16-alpha hydroxylase activity. Catalyzes 16-alpha hydroxylation of 17-alpha hydroxy pregnenolone, followed by the cleavage of the C17-C20 bond to form 16-alpha-hydroxy DHEA. Also 16-alpha hydroxylates androgens, relevant for estriol synthesis. Mechanistically, uses molecular oxygen inserting one oxygen atom into a substrate, and reducing the second into a water molecule, with two electrons provided by NADPH via cytochrome P450 reductase (CPR; NADPH-ferrihemoprotein reductase). The polypeptide is Steroid 17-alpha-hydroxylase/17,20 lyase (CYP17A1) (Ovis aries (Sheep)).